Consider the following 163-residue polypeptide: Nucleotide-binding protein SYNPCC7002_A1983 (163 aa).

The protein belongs to the YajQ family.

Functionally, nucleotide-binding protein. The sequence is that of Nucleotide-binding protein SYNPCC7002_A1983 from Picosynechococcus sp. (strain ATCC 27264 / PCC 7002 / PR-6) (Agmenellum quadruplicatum).